The following is a 456-amino-acid chain: Bifunctional protein GlmU (456 aa).

Residues 1–229 are pyrophosphorylase; sequence MLNNAMSVVI…LSEVEGVNNR (229 aa). UDP-N-acetyl-alpha-D-glucosamine is bound by residues 11–14, Lys25, Gln76, 81–82, 103–105, Gly140, Glu154, Asn169, and Asn227; these read LAAG, GT, and YGD. Residue Asp105 participates in Mg(2+) binding. A Mg(2+)-binding site is contributed by Asn227. Positions 230–250 are linker; it reads LQLSRLERVYQSEQAEKLLLA. The tract at residues 251-456 is N-acetyltransferase; it reads GVMLRDPARF…EGWRRPVKKK (206 aa). UDP-N-acetyl-alpha-D-glucosamine is bound by residues Arg333 and Lys351. His363 acts as the Proton acceptor in catalysis. UDP-N-acetyl-alpha-D-glucosamine-binding residues include Tyr366 and Asn377. Residues Ala380, 386-387, Ser405, Ala423, and Arg440 contribute to the acetyl-CoA site; that span reads NY.

The protein in the N-terminal section; belongs to the N-acetylglucosamine-1-phosphate uridyltransferase family. In the C-terminal section; belongs to the transferase hexapeptide repeat family. As to quaternary structure, homotrimer. Mg(2+) serves as cofactor.

Its subcellular location is the cytoplasm. The catalysed reaction is alpha-D-glucosamine 1-phosphate + acetyl-CoA = N-acetyl-alpha-D-glucosamine 1-phosphate + CoA + H(+). It carries out the reaction N-acetyl-alpha-D-glucosamine 1-phosphate + UTP + H(+) = UDP-N-acetyl-alpha-D-glucosamine + diphosphate. It participates in nucleotide-sugar biosynthesis; UDP-N-acetyl-alpha-D-glucosamine biosynthesis; N-acetyl-alpha-D-glucosamine 1-phosphate from alpha-D-glucosamine 6-phosphate (route II): step 2/2. The protein operates within nucleotide-sugar biosynthesis; UDP-N-acetyl-alpha-D-glucosamine biosynthesis; UDP-N-acetyl-alpha-D-glucosamine from N-acetyl-alpha-D-glucosamine 1-phosphate: step 1/1. Its pathway is bacterial outer membrane biogenesis; LPS lipid A biosynthesis. Catalyzes the last two sequential reactions in the de novo biosynthetic pathway for UDP-N-acetylglucosamine (UDP-GlcNAc). The C-terminal domain catalyzes the transfer of acetyl group from acetyl coenzyme A to glucosamine-1-phosphate (GlcN-1-P) to produce N-acetylglucosamine-1-phosphate (GlcNAc-1-P), which is converted into UDP-GlcNAc by the transfer of uridine 5-monophosphate (from uridine 5-triphosphate), a reaction catalyzed by the N-terminal domain. The protein is Bifunctional protein GlmU of Escherichia coli O139:H28 (strain E24377A / ETEC).